Consider the following 229-residue polypeptide: MESSLKIKDIPQNERPKEKLLTYGAESLSNSELLAIIIRTGTQGENVLQLCSRLLSELEGLNGILDASFDDIISIKGIKQGKASQILALAELFKRFRTLKAINNDIKITSPKDLASLLMGEMNELNQEVLKVVLLNTKNIVVGIKDVFKGSLNTSVVHPREIFKQAISKNSASIIICHNHPSGDPTPSREDINITLRIKECGNIIGIQLVDHIIIGNNKFVSLKERGLI.

Residues 107 to 229 (KITSPKDLAS…FVSLKERGLI (123 aa)) enclose the MPN domain. Positions 178, 180, and 191 each coordinate Zn(2+). Residues 178–191 (HNHPSGDPTPSRED) carry the JAMM motif motif.

Belongs to the UPF0758 family.

In Clostridium beijerinckii (strain ATCC 51743 / NCIMB 8052) (Clostridium acetobutylicum), this protein is UPF0758 protein Cbei_0490.